The sequence spans 381 residues: Creatine kinase M-type (381 aa).

One can recognise a Phosphagen kinase N-terminal domain in the interval 11 to 98; the sequence is KLNYKSEEEY…FDPIIQDRHG (88 aa). In terms of domain architecture, Phosphagen kinase C-terminal spans 125–367; sequence YVLSSRVRTG…KLMVEMEKKL (243 aa). An ATP-binding site is contributed by 128 to 132; the sequence is SSRVR. S164 carries the phosphoserine modification. Position 166 is a phosphothreonine (T166). S178 is subject to Phosphoserine. A Phosphothreonine modification is found at T180. H191 is a binding site for ATP. S199 carries the post-translational modification Phosphoserine. R236 and R292 together coordinate ATP. 2 positions are modified to phosphothreonine: T313 and T322. Residue 320 to 325 coordinates ATP; the sequence is RGTGGV. S372 is subject to Phosphoserine.

It belongs to the ATP:guanido phosphotransferase family. As to quaternary structure, dimer of identical or non-identical chains, which can be either B (brain type) or M (muscle type). With MM being the major form in skeletal muscle and myocardium, MB existing in myocardium, and BB existing in many tissues, especially brain.

The catalysed reaction is creatine + ATP = N-phosphocreatine + ADP + H(+). In terms of biological role, reversibly catalyzes the transfer of phosphate between ATP and various phosphogens (e.g. creatine phosphate). Creatine kinase isoenzymes play a central role in energy transduction in tissues with large, fluctuating energy demands, such as skeletal muscle, heart, brain and spermatozoa. The chain is Creatine kinase M-type (CKM) from Oryctolagus cuniculus (Rabbit).